The following is a 1155-amino-acid chain: DNA-directed RNA polymerase subunit beta (1155 aa).

The protein belongs to the RNA polymerase beta chain family. As to quaternary structure, the RNAP catalytic core consists of 2 alpha, 1 beta, 1 beta' and 1 omega subunit. When a sigma factor is associated with the core the holoenzyme is formed, which can initiate transcription.

It carries out the reaction RNA(n) + a ribonucleoside 5'-triphosphate = RNA(n+1) + diphosphate. Its function is as follows. DNA-dependent RNA polymerase catalyzes the transcription of DNA into RNA using the four ribonucleoside triphosphates as substrates. The chain is DNA-directed RNA polymerase subunit beta from Thermobifida fusca (strain YX).